A 469-amino-acid chain; its full sequence is 3-isopropylmalate dehydratase large subunit (469 aa).

Positions 347, 410, and 413 each coordinate [4Fe-4S] cluster.

This sequence belongs to the aconitase/IPM isomerase family. LeuC type 1 subfamily. Heterodimer of LeuC and LeuD. [4Fe-4S] cluster serves as cofactor.

The catalysed reaction is (2R,3S)-3-isopropylmalate = (2S)-2-isopropylmalate. It functions in the pathway amino-acid biosynthesis; L-leucine biosynthesis; L-leucine from 3-methyl-2-oxobutanoate: step 2/4. Its function is as follows. Catalyzes the isomerization between 2-isopropylmalate and 3-isopropylmalate, via the formation of 2-isopropylmaleate. The sequence is that of 3-isopropylmalate dehydratase large subunit from Polynucleobacter necessarius subsp. necessarius (strain STIR1).